The following is a 352-amino-acid chain: tRNA (guanine-N(1)-)-methyltransferase (352 aa).

S-adenosyl-L-methionine contacts are provided by residues Gly-109 and 129-134 (IGDYVL).

Belongs to the RNA methyltransferase TrmD family. Homodimer.

The protein resides in the cytoplasm. The catalysed reaction is guanosine(37) in tRNA + S-adenosyl-L-methionine = N(1)-methylguanosine(37) in tRNA + S-adenosyl-L-homocysteine + H(+). Its function is as follows. Specifically methylates guanosine-37 in various tRNAs. The sequence is that of tRNA (guanine-N(1)-)-methyltransferase from Chlamydia trachomatis serovar A (strain ATCC VR-571B / DSM 19440 / HAR-13).